Consider the following 258-residue polypeptide: Small ribosomal subunit protein uS3 (258 aa).

The KH type-2 domain occupies 43–111 (IRKLMSTGLE…QVQLNILEVK (69 aa)). Residues 217–258 (AREQASAAPRARGRADRPRGRRDEGAAPQQAAAPAATTGTEA) form a disordered region. The segment covering 229-241 (GRADRPRGRRDEG) has biased composition (basic and acidic residues). Positions 242 to 258 (AAPQQAAAPAATTGTEA) are enriched in low complexity.

Belongs to the universal ribosomal protein uS3 family. In terms of assembly, part of the 30S ribosomal subunit. Forms a tight complex with proteins S10 and S14.

In terms of biological role, binds the lower part of the 30S subunit head. Binds mRNA in the 70S ribosome, positioning it for translation. This is Small ribosomal subunit protein uS3 from Beutenbergia cavernae (strain ATCC BAA-8 / DSM 12333 / CCUG 43141 / JCM 11478 / NBRC 16432 / NCIMB 13614 / HKI 0122).